Reading from the N-terminus, the 444-residue chain is Tol-Pal system protein TolB (444 aa).

Residues 1 to 18 (MKNIIYCILLLFSFNSYA) form the signal peptide.

Belongs to the TolB family. The Tol-Pal system is composed of five core proteins: the inner membrane proteins TolA, TolQ and TolR, the periplasmic protein TolB and the outer membrane protein Pal. They form a network linking the inner and outer membranes and the peptidoglycan layer.

The protein localises to the periplasm. Part of the Tol-Pal system, which plays a role in outer membrane invagination during cell division and is important for maintaining outer membrane integrity. The sequence is that of Tol-Pal system protein TolB from Rickettsia bellii (strain OSU 85-389).